Reading from the N-terminus, the 366-residue chain is Box C/D snoRNA protein 1 (366 aa).

Zn(2+)-binding residues include Cys-5, Cys-8, Cys-17, Cys-20, Cys-25, Cys-29, His-33, and Cys-39. Residues Cys-5 to Cys-39 form an HIT-type zinc finger. Residues Asp-318–Ala-366 are disordered. 2 stretches are compositionally biased toward acidic residues: residues Arg-321–Pro-332 and Asp-343–Tyr-355. Position 330 is a phosphoserine (Ser-330).

Belongs to the BCD1 family.

The protein resides in the nucleus. Required for box C/D snoRNAs accumulation involved in snoRNA processing, snoRNA transport to the nucleolus and ribosome biogenesis. This Saccharomyces cerevisiae (strain ATCC 204508 / S288c) (Baker's yeast) protein is Box C/D snoRNA protein 1 (BCD1).